The primary structure comprises 206 residues: Probable GTP-binding protein EngB (206 aa).

Residues 7-195 enclose the EngB-type G domain; sequence DCDEVVLLGR…EEALQAIFSD (189 aa). GTP contacts are provided by residues 15–22, 41–45, 60–63, 140–143, and 175–177; these read GRSNVGKS, GVTRS, DLPG, NKID, and ISA. Residues Ser-22 and Thr-43 each coordinate Mg(2+).

The protein belongs to the TRAFAC class TrmE-Era-EngA-EngB-Septin-like GTPase superfamily. EngB GTPase family. It depends on Mg(2+) as a cofactor.

Its function is as follows. Necessary for normal cell division and for the maintenance of normal septation. The protein is Probable GTP-binding protein EngB of Haloquadratum walsbyi (strain DSM 16790 / HBSQ001).